The sequence spans 286 residues: Phycobilisome 32.1 kDa linker polypeptide, phycocyanin-associated, rod (286 aa).

Residues 2–180 (AITTAASRLG…LYRGYANSDR (179 aa)) form the PBS-linker domain. In terms of domain architecture, CpcD-like spans 234–286 (DRVYRLEVTGIRSPGYPSVRRSSTVFIVPYERLSDKIQQVHKQGGKIVSVTSA).

The protein belongs to the phycobilisome linker protein family. As to quaternary structure, associated with the phycobilisome, a hemidiscoidal structure that is composed of two distinct substructures: a core complex and a number of rods radiating from the core.

The protein resides in the cellular thylakoid membrane. In terms of biological role, rod linker protein, associated with phycocyanin. Linker polypeptides determine the state of aggregation and the location of the disk-shaped phycobiliprotein units within the phycobilisome and modulate their spectroscopic properties in order to mediate a directed and optimal energy transfer. This is Phycobilisome 32.1 kDa linker polypeptide, phycocyanin-associated, rod (cpcC) from Nostoc sp. (strain PCC 7120 / SAG 25.82 / UTEX 2576).